Here is a 92-residue protein sequence, read N- to C-terminus: Cytochrome c2 (92 aa).

4 residues coordinate heme c: cysteine 12, cysteine 15, histidine 16, and methionine 66.

The protein belongs to the cytochrome c family. Post-translationally, binds 1 heme c group covalently per subunit.

Cytochrome c2 is found mainly in purple, non-sulfur, photosynthetic bacteria where it functions as the electron donor to the oxidized bacteriochlorophyll in the photophosphorylation pathway. However, it may also have a role in the respiratory chain and is found in some non-photosynthetic bacteria. The protein is Cytochrome c2 of Rhodocyclus tenuis (Rhodospirillum tenue).